We begin with the raw amino-acid sequence, 90 residues long: Large ribosomal subunit protein eL37 (90 aa).

The A20-type zinc finger occupies 13–46; sequence NKSHTLCNRCGRRSFHVQKKTCSSCGYPAAKMRS. Positions 19, 22, 34, and 37 each coordinate Zn(2+).

This sequence belongs to the eukaryotic ribosomal protein eL37 family. As to quaternary structure, component of the large ribosomal subunit. Mature ribosomes consist of a small (40S) and a large (60S) subunit. The 40S subunit contains about 32 different proteins and 1 molecule of RNA (18S). The 60S subunit contains 45 different proteins and 3 molecules of RNA (25S, 5.8S and 5S). It depends on Zn(2+) as a cofactor.

It is found in the cytoplasm. Functionally, component of the ribosome, a large ribonucleoprotein complex responsible for the synthesis of proteins in the cell. The small ribosomal subunit (SSU) binds messenger RNAs (mRNAs) and translates the encoded message by selecting cognate aminoacyl-transfer RNA (tRNA) molecules. The large subunit (LSU) contains the ribosomal catalytic site termed the peptidyl transferase center (PTC), which catalyzes the formation of peptide bonds, thereby polymerizing the amino acids delivered by tRNAs into a polypeptide chain. The nascent polypeptides leave the ribosome through a tunnel in the LSU and interact with protein factors that function in enzymatic processing, targeting, and the membrane insertion of nascent chains at the exit of the ribosomal tunnel. This Candida albicans (strain SC5314 / ATCC MYA-2876) (Yeast) protein is Large ribosomal subunit protein eL37.